We begin with the raw amino-acid sequence, 234 residues long: Probable cyclic nucleotide phosphodiesterase Rmag_0669 (234 aa).

Positions 11, 13, 49, 79, 145, 184, and 186 each coordinate Fe cation. AMP-binding positions include H13, D49, and 79–80 (NH). Position 186 (H186) interacts with AMP.

This sequence belongs to the cyclic nucleotide phosphodiesterase class-III family. Requires Fe(2+) as cofactor.

This is Probable cyclic nucleotide phosphodiesterase Rmag_0669 from Ruthia magnifica subsp. Calyptogena magnifica.